The primary structure comprises 452 residues: Phosphoglucosamine mutase (452 aa).

S104 (phosphoserine intermediate) is an active-site residue. Mg(2+) is bound by residues S104, D246, D248, and D250. S104 is subject to Phosphoserine.

It belongs to the phosphohexose mutase family. It depends on Mg(2+) as a cofactor. Activated by phosphorylation.

It carries out the reaction alpha-D-glucosamine 1-phosphate = D-glucosamine 6-phosphate. In terms of biological role, catalyzes the conversion of glucosamine-6-phosphate to glucosamine-1-phosphate. In Streptomyces coelicolor (strain ATCC BAA-471 / A3(2) / M145), this protein is Phosphoglucosamine mutase.